A 410-amino-acid polypeptide reads, in one-letter code: uncharacterized protein (410 aa).

A run of 11 helical transmembrane segments spans residues 14–34, 48–68, 82–102, 140–160, 164–184, 212–232, 251–271, 279–299, 303–323, 342–362, and 371–391; these read IIIG…FLAI, GLVI…GGYI, IFGW…WVFF, YAAI…FGSS, TPFL…ALQF, YLFT…SQFS, LYGL…FPIV, PLCS…IFTV, VPSI…LFSM, GAIG…GICI, and IYIF…LAFA.

It belongs to the major facilitator superfamily. TCR/Tet family.

Its subcellular location is the cell membrane. This is an uncharacterized protein from Bacillus subtilis (strain 168).